Here is a 337-residue protein sequence, read N- to C-terminus: uncharacterized protein (337 aa).

Belongs to the mimivirus R69 family.

This is an uncharacterized protein from Acanthamoeba polyphaga mimivirus (APMV).